A 64-amino-acid polypeptide reads, in one-letter code: Conotoxin Cal12.4 (64 aa).

Positions 1-21 are cleaved as a signal peptide; the sequence is MKLTCMLVVLLLVLPFGDLIA.

The protein belongs to the conotoxin O1 superfamily. Post-translationally, contains 4 disulfide bonds. In terms of tissue distribution, expressed by the venom duct.

Its subcellular location is the secreted. Its function is as follows. Probable neurotoxin. This chain is Conotoxin Cal12.4, found in Californiconus californicus (California cone).